The primary structure comprises 249 residues: MWVGVISLFPEMFTSITNFGVTGQAVKKGLLSIDTWNPRDFTEDKHRTVDDRPYGGGPGMLMMVQPLRDAIHTAKKSAKGKAKVIYLSPQGRKLDQAGVEELAQNESLILICGRYEGVDERIIQQEVDEEWSIGDFVLTGGELPAMTLVDAVVRFVPGVLGDFASAEEDSFANGLLDCPHYTRPDVLDGHAVPKVLMSGNHKDISRWRLKQSLGRTWLRRPELLGNLALTDDQEFLLAEFIREYKASII.

Residues Gly113 and Ile133–Leu138 each bind S-adenosyl-L-methionine.

Belongs to the RNA methyltransferase TrmD family. Homodimer.

It localises to the cytoplasm. The enzyme catalyses guanosine(37) in tRNA + S-adenosyl-L-methionine = N(1)-methylguanosine(37) in tRNA + S-adenosyl-L-homocysteine + H(+). Its function is as follows. Specifically methylates guanosine-37 in various tRNAs. The sequence is that of tRNA (guanine-N(1)-)-methyltransferase from Photobacterium profundum (strain SS9).